The primary structure comprises 61 residues: Large ribosomal subunit protein bL28 (61 aa).

Residues 1-24 form a disordered region; the sequence is MAKDYVTGKKTTFGNKRSHSLNPT. A compositionally biased stretch (polar residues) spans 9 to 23; the sequence is KKTTFGNKRSHSLNP.

The protein belongs to the bacterial ribosomal protein bL28 family.

In Lactobacillus acidophilus (strain ATCC 700396 / NCK56 / N2 / NCFM), this protein is Large ribosomal subunit protein bL28.